Here is a 502-residue protein sequence, read N- to C-terminus: 2-isopropylmalate synthase (502 aa).

Residues aspartate 1, histidine 189, histidine 191, and asparagine 225 each contribute to the Mn(2+) site. Residues 1-254 (DGEQALQASL…STNINHKEIY (254 aa)) enclose the Pyruvate carboxyltransferase domain. Residues 379–502 (CLKFFSVQSI…VNKNLKNLKK (124 aa)) form a regulatory domain region.

It belongs to the alpha-IPM synthase/homocitrate synthase family. LeuA type 1 subfamily. In terms of assembly, homodimer. The cofactor is Mn(2+).

It localises to the cytoplasm. The catalysed reaction is 3-methyl-2-oxobutanoate + acetyl-CoA + H2O = (2S)-2-isopropylmalate + CoA + H(+). It participates in amino-acid biosynthesis; L-leucine biosynthesis; L-leucine from 3-methyl-2-oxobutanoate: step 1/4. In terms of biological role, catalyzes the condensation of the acetyl group of acetyl-CoA with 3-methyl-2-oxobutanoate (2-ketoisovalerate) to form 3-carboxy-3-hydroxy-4-methylpentanoate (2-isopropylmalate). This Buchnera aphidicola subsp. Uroleucon sonchi protein is 2-isopropylmalate synthase.